Reading from the N-terminus, the 562-residue chain is O-fucosyltransferase 4 (562 aa).

The segment at 10 to 46 (SIQNRLPGSDHTTPSPPTSPHLCRSRSKSSSVSGQQQ) is disordered. Residues 37 to 46 (KSSSVSGQQQ) are compositionally biased toward low complexity. A helical; Signal-anchor for type II membrane protein membrane pass occupies residues 67–87 (GILLFAPIIYISCMLFHLHAA). 4 N-linked (GlcNAc...) asparagine glycosylation sites follow: N122, N146, N185, and N239. Residue 332–334 (HLR) participates in substrate binding. N404, N420, N450, and N555 each carry an N-linked (GlcNAc...) asparagine glycan.

Belongs to the glycosyltransferase GT106 family.

It is found in the membrane. Its pathway is glycan metabolism. The protein is O-fucosyltransferase 4 of Arabidopsis thaliana (Mouse-ear cress).